Consider the following 236-residue polypeptide: Alpha-acetolactate decarboxylase (236 aa).

It belongs to the alpha-acetolactate decarboxylase family.

It catalyses the reaction (2S)-2-acetolactate + H(+) = (R)-acetoin + CO2. Its pathway is polyol metabolism; (R,R)-butane-2,3-diol biosynthesis; (R,R)-butane-2,3-diol from pyruvate: step 2/3. Its function is as follows. Converts acetolactate into acetoin. This is Alpha-acetolactate decarboxylase (aldB) from Lactococcus lactis subsp. cremoris (strain MG1363).